Consider the following 371-residue polypeptide: Alginate lyase (371 aa).

Residues 1 to 28 (MRRPMTLFKRISSPALLALALFGGAAHA) form the signal peptide. Substrate contacts are provided by residues 67–68 (SK), 140–141 (HT), and Tyr258.

Belongs to the polysaccharide lyase 5 family.

The protein resides in the periplasm. It catalyses the reaction Eliminative cleavage of alginate to give oligosaccharides with 4-deoxy-alpha-L-erythro-hex-4-enuronosyl groups at their non-reducing ends and beta-D-mannuronate at their reducing end.. Catalyzes the depolymerization of alginate by cleaving the beta-1,4 glycosidic bond between two adjacent sugar residues via a beta-elimination mechanism. May serve to degrade mislocalized alginate that is trapped in the periplasmic space. This chain is Alginate lyase, found in Pseudomonas putida (strain ATCC 47054 / DSM 6125 / CFBP 8728 / NCIMB 11950 / KT2440).